Reading from the N-terminus, the 428-residue chain is Glucose-1-phosphate adenylyltransferase (428 aa).

Residues Y99, G164, 179 to 180, and S190 each bind alpha-D-glucose 1-phosphate; that span reads EK.

It belongs to the bacterial/plant glucose-1-phosphate adenylyltransferase family. In terms of assembly, homotetramer.

It catalyses the reaction alpha-D-glucose 1-phosphate + ATP + H(+) = ADP-alpha-D-glucose + diphosphate. Its pathway is glycan biosynthesis; glycogen biosynthesis. Functionally, involved in the biosynthesis of ADP-glucose, a building block required for the elongation reactions to produce glycogen. Catalyzes the reaction between ATP and alpha-D-glucose 1-phosphate (G1P) to produce pyrophosphate and ADP-Glc. The protein is Glucose-1-phosphate adenylyltransferase of Thermomicrobium roseum (strain ATCC 27502 / DSM 5159 / P-2).